The chain runs to 226 residues: Fibrillarin-like rRNA/tRNA 2'-O-methyltransferase (226 aa).

Residues Thr-85–Thr-86, Glu-104–Phe-105, Asp-129–Ala-130, and Asp-149–Gln-152 contribute to the S-adenosyl-L-methionine site.

The protein belongs to the methyltransferase superfamily. Fibrillarin family. Interacts with nop5. Component of box C/D small ribonucleoprotein (sRNP) particles that contain rpl7ae, FlpA and nop5, plus a guide RNA.

In terms of biological role, involved in pre-rRNA and tRNA processing. Utilizes the methyl donor S-adenosyl-L-methionine to catalyze the site-specific 2'-hydroxyl methylation of ribose moieties in rRNA and tRNA. Site specificity is provided by a guide RNA that base pairs with the substrate. Methylation occurs at a characteristic distance from the sequence involved in base pairing with the guide RNA. The chain is Fibrillarin-like rRNA/tRNA 2'-O-methyltransferase from Thermococcus sibiricus (strain DSM 12597 / MM 739).